The following is a 160-amino-acid chain: uncharacterized protein (160 aa).

Over residues 1–31 (METEKPNTDVKVAQDLEKLKLDEKHKDEKKD) the composition is skewed to basic and acidic residues. Residues 1–160 (METEKPNTDV…DKKDKEHKKE (160 aa)) are disordered. Residues 20-111 (KLDEKHKDEK…KSKLEGKKDK (92 aa)) are a coiled coil. Residues 32–42 (KKDKKDKKDKK) are compositionally biased toward basic residues. The span at 43–160 (DKKEKTPEEI…DKKDKEHKKE (118 aa)) shows a compositional bias: basic and acidic residues.

This is an uncharacterized protein from Dictyostelium discoideum (Social amoeba).